A 99-amino-acid polypeptide reads, in one-letter code: Glycine-rich protein (99 aa).

Residues 1-18 form the signal peptide; it reads MKSMIAVLLLALVATSMA.

This sequence belongs to the non-disulfide-bridged peptide (NDBP) superfamily. In terms of tissue distribution, expressed by the venom gland.

The protein localises to the secreted. The sequence is that of Glycine-rich protein from Lychas mucronatus (Chinese swimming scorpion).